Consider the following 428-residue polypeptide: 3-phosphoshikimate 1-carboxyvinyltransferase (428 aa).

3-phosphoshikimate contacts are provided by lysine 23, serine 24, and arginine 28. Residue lysine 23 coordinates phosphoenolpyruvate. The phosphoenolpyruvate site is built by glycine 92 and arginine 120. Serine 165, glutamine 167, aspartate 312, and lysine 339 together coordinate 3-phosphoshikimate. Glutamine 167 is a phosphoenolpyruvate binding site. Aspartate 312 (proton acceptor) is an active-site residue. Phosphoenolpyruvate contacts are provided by arginine 343 and arginine 384.

The protein belongs to the EPSP synthase family. As to quaternary structure, monomer.

The protein localises to the cytoplasm. The catalysed reaction is 3-phosphoshikimate + phosphoenolpyruvate = 5-O-(1-carboxyvinyl)-3-phosphoshikimate + phosphate. The protein operates within metabolic intermediate biosynthesis; chorismate biosynthesis; chorismate from D-erythrose 4-phosphate and phosphoenolpyruvate: step 6/7. Its function is as follows. Catalyzes the transfer of the enolpyruvyl moiety of phosphoenolpyruvate (PEP) to the 5-hydroxyl of shikimate-3-phosphate (S3P) to produce enolpyruvyl shikimate-3-phosphate and inorganic phosphate. This Sulfurimonas denitrificans (strain ATCC 33889 / DSM 1251) (Thiomicrospira denitrificans (strain ATCC 33889 / DSM 1251)) protein is 3-phosphoshikimate 1-carboxyvinyltransferase.